The primary structure comprises 138 residues: Putative pre-16S rRNA nuclease (138 aa).

The protein belongs to the YqgF nuclease family.

It localises to the cytoplasm. Could be a nuclease involved in processing of the 5'-end of pre-16S rRNA. This is Putative pre-16S rRNA nuclease from Flavobacterium johnsoniae (strain ATCC 17061 / DSM 2064 / JCM 8514 / BCRC 14874 / CCUG 350202 / NBRC 14942 / NCIMB 11054 / UW101) (Cytophaga johnsonae).